We begin with the raw amino-acid sequence, 96 residues long: uncharacterized protein (96 aa).

3 consecutive transmembrane segments (helical) span residues 2-22 (FIFN…ICYF), 38-58 (AGLK…TVML), and 68-88 (LTLA…QLIV).

It localises to the membrane. This is an uncharacterized protein from Schizosaccharomyces pombe (strain 972 / ATCC 24843) (Fission yeast).